The sequence spans 486 residues: Glycogen synthase (486 aa).

Lysine 20 contributes to the ADP-alpha-D-glucose binding site.

This sequence belongs to the glycosyltransferase 1 family. Bacterial/plant glycogen synthase subfamily.

It catalyses the reaction [(1-&gt;4)-alpha-D-glucosyl](n) + ADP-alpha-D-glucose = [(1-&gt;4)-alpha-D-glucosyl](n+1) + ADP + H(+). It participates in glycan biosynthesis; glycogen biosynthesis. Functionally, synthesizes alpha-1,4-glucan chains using ADP-glucose. This is Glycogen synthase from Aeromonas salmonicida (strain A449).